The following is a 150-amino-acid chain: Urease accessory protein UreE (150 aa).

Belongs to the UreE family.

The protein resides in the cytoplasm. Functionally, involved in urease metallocenter assembly. Binds nickel. Probably functions as a nickel donor during metallocenter assembly. In Staphylococcus aureus (strain MRSA252), this protein is Urease accessory protein UreE.